The sequence spans 1399 residues: DNA-directed RNA polymerase subunit beta' (1399 aa).

Zn(2+) contacts are provided by cysteine 70, cysteine 72, cysteine 85, and cysteine 88. Aspartate 460, aspartate 462, and aspartate 464 together coordinate Mg(2+). The Zn(2+) site is built by cysteine 814, cysteine 888, cysteine 895, and cysteine 898.

It belongs to the RNA polymerase beta' chain family. In terms of assembly, the RNAP catalytic core consists of 2 alpha, 1 beta, 1 beta' and 1 omega subunit. When a sigma factor is associated with the core the holoenzyme is formed, which can initiate transcription. The cofactor is Mg(2+). Zn(2+) serves as cofactor.

It carries out the reaction RNA(n) + a ribonucleoside 5'-triphosphate = RNA(n+1) + diphosphate. Functionally, DNA-dependent RNA polymerase catalyzes the transcription of DNA into RNA using the four ribonucleoside triphosphates as substrates. In Pseudomonas putida (strain W619), this protein is DNA-directed RNA polymerase subunit beta'.